The sequence spans 469 residues: tRNA(Ile)-lysidine synthase (469 aa).

Position 26–31 (26–31 (SGGPDS)) interacts with ATP.

This sequence belongs to the tRNA(Ile)-lysidine synthase family.

It is found in the cytoplasm. The enzyme catalyses cytidine(34) in tRNA(Ile2) + L-lysine + ATP = lysidine(34) in tRNA(Ile2) + AMP + diphosphate + H(+). Functionally, ligates lysine onto the cytidine present at position 34 of the AUA codon-specific tRNA(Ile) that contains the anticodon CAU, in an ATP-dependent manner. Cytidine is converted to lysidine, thus changing the amino acid specificity of the tRNA from methionine to isoleucine. The protein is tRNA(Ile)-lysidine synthase of Shouchella clausii (strain KSM-K16) (Alkalihalobacillus clausii).